Reading from the N-terminus, the 257-residue chain is Transmembrane protein C257L (257 aa).

The next 2 membrane-spanning stretches (helical) occupy residues 123-143 (LELL…FTAL) and 163-183 (MMIF…YVLV).

Belongs to the asfivirus C257R family.

The protein resides in the host membrane. It localises to the virion. The sequence is that of Transmembrane protein C257L from Ornithodoros (relapsing fever ticks).